Reading from the N-terminus, the 334-residue chain is Large ribosomal subunit protein uL3 (334 aa).

The segment covering 1 to 10 (MGMKKSRPRR) has biased composition (basic residues). The interval 1–20 (MGMKKSRPRRGSLAFSPRKR) is disordered.

This sequence belongs to the universal ribosomal protein uL3 family. As to quaternary structure, part of the 50S ribosomal subunit. Forms a cluster with proteins L14 and L24e.

Functionally, one of the primary rRNA binding proteins, it binds directly near the 3'-end of the 23S rRNA, where it nucleates assembly of the 50S subunit. This is Large ribosomal subunit protein uL3 from Methanococcus maripaludis (strain C7 / ATCC BAA-1331).